The primary structure comprises 148 residues: Peroxide-responsive repressor PerR (148 aa).

A DNA-binding region spans residues 1 to 84 (MSVEIESIEH…IGIVKELTYG (84 aa)). Zn(2+)-binding residues include Cys102, Cys105, Cys142, and Cys145.

Belongs to the Fur family.

It is found in the cytoplasm. Its function is as follows. Manganese-dependent repressor that controls a regulon of oxidative stress resistance and iron-storage proteins. May act as a hydrogen peroxide and organic hydroperoxide sensor. The chain is Peroxide-responsive repressor PerR (perR) from Staphylococcus aureus (strain Mu50 / ATCC 700699).